The chain runs to 317 residues: Ciliary microtubule inner protein 2A (317 aa).

The tract at residues 131–153 (TPDTPHPPCPPGRKGDSRDLGHP) is disordered.

Belongs to the CIMIP2 family. In terms of assembly, microtubule inner protein component of sperm flagellar doublet microtubules.

It is found in the cytoplasm. It localises to the cytoskeleton. Its subcellular location is the flagellum axoneme. Microtubule inner protein (MIP) part of the dynein-decorated doublet microtubules (DMTs) in flagellum axoneme. Binds to the intra-tubulin interfaces. In Homo sapiens (Human), this protein is Ciliary microtubule inner protein 2A.